A 273-amino-acid chain; its full sequence is MIPFGSRLHAAIADRGPLCVGIDPHAGLLSDWGLGDDVAGLETFALEVVEAIAPYVSVVKPQSAFFERFGSRGIAVLERVIAQSRAAGALVLLDVKRGDIGSTSQAYADAYLDPTSPLASDAITVSPFLGFGSLDPIVETARTHGAGLFVLALTSNKEGPEVQHARVDGVAGGGTVAGLMLDHLRRLNAEASPLGSFGAVVGATIGSTDEDLAFNGPVLAPGFGAQGGTIADVRRLFGAAAAVLPSSSRDVLRLQDPDVMRDFVVRTNDELRS.

Lys96 serves as the catalytic Proton donor.

This sequence belongs to the OMP decarboxylase family. Type 2 subfamily.

The enzyme catalyses orotidine 5'-phosphate + H(+) = UMP + CO2. It participates in pyrimidine metabolism; UMP biosynthesis via de novo pathway; UMP from orotate: step 2/2. In Nocardioides sp. (strain ATCC BAA-499 / JS614), this protein is Orotidine 5'-phosphate decarboxylase.